The primary structure comprises 95 residues: Aspartyl/glutamyl-tRNA(Asn/Gln) amidotransferase subunit C (95 aa).

Belongs to the GatC family. Heterotrimer of A, B and C subunits.

It carries out the reaction L-glutamyl-tRNA(Gln) + L-glutamine + ATP + H2O = L-glutaminyl-tRNA(Gln) + L-glutamate + ADP + phosphate + H(+). The catalysed reaction is L-aspartyl-tRNA(Asn) + L-glutamine + ATP + H2O = L-asparaginyl-tRNA(Asn) + L-glutamate + ADP + phosphate + 2 H(+). Allows the formation of correctly charged Asn-tRNA(Asn) or Gln-tRNA(Gln) through the transamidation of misacylated Asp-tRNA(Asn) or Glu-tRNA(Gln) in organisms which lack either or both of asparaginyl-tRNA or glutaminyl-tRNA synthetases. The reaction takes place in the presence of glutamine and ATP through an activated phospho-Asp-tRNA(Asn) or phospho-Glu-tRNA(Gln). The polypeptide is Aspartyl/glutamyl-tRNA(Asn/Gln) amidotransferase subunit C (Jannaschia sp. (strain CCS1)).